Consider the following 941-residue polypeptide: RNA-directed RNA polymerase (941 aa).

Positions 875 to 918 (SARQGGMGLPPPPPPPLGGGGMAGPPPPPFMGLRPESSVPTSVP) are disordered. Residues 905-918 (MGLRPESSVPTSVP) show a composition bias toward low complexity.

Forms a ribonucleoprotein complex with the 23S RNA, where a single polymerase molecule binds to a single viral RNA genome. Since the viral RNA is not encapsidated, ribonucleoprotein complex formation appears to be the strategy to survive in the host as persistent virus.

Its subcellular location is the host cytoplasm. It catalyses the reaction RNA(n) + a ribonucleoside 5'-triphosphate = RNA(n+1) + diphosphate. In terms of biological role, RNA-directed RNA polymerase that replicates the viral (+) and (-) genome. In Saccharomyces 23S RNA narnavirus (ScNV-23S), this protein is RNA-directed RNA polymerase.